Reading from the N-terminus, the 392-residue chain is Phospho-N-acetylmuramoyl-pentapeptide-transferase (392 aa).

Helical transmembrane passes span 28-48 (IIAA…KLIA), 76-96 (TMGG…FADL), 101-121 (VWVM…DDWL), 137-157 (MVLQ…TWTL), 181-201 (WFNP…VVGT), 213-233 (GLAI…CYVA), 268-288 (GAEL…FLWF), 295-315 (VFMG…LAML), 320-340 (VVSA…MIQV), and 369-389 (KIIV…LLSL).

This sequence belongs to the glycosyltransferase 4 family. MraY subfamily. The cofactor is Mg(2+).

The protein resides in the cell inner membrane. It carries out the reaction UDP-N-acetyl-alpha-D-muramoyl-L-alanyl-gamma-D-glutamyl-meso-2,6-diaminopimeloyl-D-alanyl-D-alanine + di-trans,octa-cis-undecaprenyl phosphate = di-trans,octa-cis-undecaprenyl diphospho-N-acetyl-alpha-D-muramoyl-L-alanyl-D-glutamyl-meso-2,6-diaminopimeloyl-D-alanyl-D-alanine + UMP. The protein operates within cell wall biogenesis; peptidoglycan biosynthesis. In terms of biological role, catalyzes the initial step of the lipid cycle reactions in the biosynthesis of the cell wall peptidoglycan: transfers peptidoglycan precursor phospho-MurNAc-pentapeptide from UDP-MurNAc-pentapeptide onto the lipid carrier undecaprenyl phosphate, yielding undecaprenyl-pyrophosphoryl-MurNAc-pentapeptide, known as lipid I. The polypeptide is Phospho-N-acetylmuramoyl-pentapeptide-transferase (Myxococcus xanthus (strain DK1622)).